A 556-amino-acid chain; its full sequence is MSVSAFNRRWAAVILEALTRHGVRHICIAPGSRSTPLTLAAAENSTFIHHTHFDERGLGHLALGLAKVSKQPVAVIVTSGTAVANLYPALIEAGLTGEKLILLTADRPPELIDCGANQAIRQPGMFASHPTHSISLPRPTRDIPARWLVSTIDHALGTLHAGGVHINCPFAEPLYGEMDDTGLSWQQRLGDWWQDDKPWLREAPRLESEKQRDWFFWRQKRGVVVAGRMSAEEGKKVALWAQTLGWPLIGDVLSQTGQPLPCADLWLGNAKATSELQQAQIVVQLGSSLTGKRLLQWQASCEPEEYWIVDDIEGRLDPAHHRGRRLIANIADWLELHPAEKRQPWCVEIPRLAEQAMQAVIARRDAFGEAQLAHRICDYLPEQGQLFVGNSLVVRLIDALSQLPAGYPVYSNRGASGIDGLLSTAAGVQRASGKPTLAIVGDLSALYDLNALALLRQVSAPLVLIVVNNNGGQIFSLLPTPQSERERFYLMPQNVHFEHAAAMFELKYHRPQNWQELETAFADAWRTPTTTVIEMVVNDTDGAQTLQQLLAQVSHL.

The protein belongs to the TPP enzyme family. MenD subfamily. Homodimer. Mg(2+) serves as cofactor. The cofactor is Mn(2+). It depends on thiamine diphosphate as a cofactor.

It carries out the reaction isochorismate + 2-oxoglutarate + H(+) = 5-enolpyruvoyl-6-hydroxy-2-succinyl-cyclohex-3-ene-1-carboxylate + CO2. The protein operates within quinol/quinone metabolism; 1,4-dihydroxy-2-naphthoate biosynthesis; 1,4-dihydroxy-2-naphthoate from chorismate: step 2/7. It participates in quinol/quinone metabolism; menaquinone biosynthesis. Catalyzes the thiamine diphosphate-dependent decarboxylation of 2-oxoglutarate and the subsequent addition of the resulting succinic semialdehyde-thiamine pyrophosphate anion to isochorismate to yield 2-succinyl-5-enolpyruvyl-6-hydroxy-3-cyclohexene-1-carboxylate (SEPHCHC). This is 2-succinyl-5-enolpyruvyl-6-hydroxy-3-cyclohexene-1-carboxylate synthase from Escherichia coli (strain 55989 / EAEC).